Here is a 147-residue protein sequence, read N- to C-terminus: Cystatin-9-like (147 aa).

A signal peptide spans 1–28 (MLGLPWKGGLSWALLLLLLGSQILLIYA). The cysteines at positions 98 and 108 are disulfide-linked. 2 N-linked (GlcNAc...) asparagine glycosylation sites follow: Asn-117 and Asn-139. The cysteines at positions 122 and 142 are disulfide-linked.

Belongs to the cystatin family. In terms of tissue distribution, specifically expressed in testis.

Its subcellular location is the secreted. This Homo sapiens (Human) protein is Cystatin-9-like (CST9L).